The primary structure comprises 231 residues: Transcriptional regulator NRG1 (231 aa).

The residue at position 163 (serine 163) is a Phosphoserine. 2 consecutive C2H2-type zinc fingers follow at residues 174-196 (YICK…NRIH) and 202-226 (HCCP…YRTH).

The protein localises to the nucleus. Transcriptional repressor involved in regulation of glucose repression. Binds to UAS-1 in the STA1 promoter. The chain is Transcriptional regulator NRG1 (NRG1) from Saccharomyces cerevisiae (strain ATCC 204508 / S288c) (Baker's yeast).